We begin with the raw amino-acid sequence, 1415 residues long: DNA-directed RNA polymerase subunit beta' (1415 aa).

Zn(2+) contacts are provided by cysteine 72, cysteine 74, cysteine 87, and cysteine 90. The Mg(2+) site is built by aspartate 463, aspartate 465, and aspartate 467. The Zn(2+) site is built by cysteine 811, cysteine 885, cysteine 892, and cysteine 895.

Belongs to the RNA polymerase beta' chain family. As to quaternary structure, the RNAP catalytic core consists of 2 alpha, 1 beta, 1 beta' and 1 omega subunit. When a sigma factor is associated with the core the holoenzyme is formed, which can initiate transcription. Mg(2+) serves as cofactor. It depends on Zn(2+) as a cofactor.

The catalysed reaction is RNA(n) + a ribonucleoside 5'-triphosphate = RNA(n+1) + diphosphate. Functionally, DNA-dependent RNA polymerase catalyzes the transcription of DNA into RNA using the four ribonucleoside triphosphates as substrates. The chain is DNA-directed RNA polymerase subunit beta' from Cereibacter sphaeroides (strain ATCC 17029 / ATH 2.4.9) (Rhodobacter sphaeroides).